The chain runs to 271 residues: Thiazole synthase (271 aa).

Catalysis depends on K104, which acts as the Schiff-base intermediate with DXP. Residues G165, 192–193 (AG), and 214–215 (NT) each bind 1-deoxy-D-xylulose 5-phosphate.

Belongs to the ThiG family. As to quaternary structure, homotetramer. Forms heterodimers with either ThiH or ThiS.

Its subcellular location is the cytoplasm. It catalyses the reaction [ThiS sulfur-carrier protein]-C-terminal-Gly-aminoethanethioate + 2-iminoacetate + 1-deoxy-D-xylulose 5-phosphate = [ThiS sulfur-carrier protein]-C-terminal Gly-Gly + 2-[(2R,5Z)-2-carboxy-4-methylthiazol-5(2H)-ylidene]ethyl phosphate + 2 H2O + H(+). It functions in the pathway cofactor biosynthesis; thiamine diphosphate biosynthesis. In terms of biological role, catalyzes the rearrangement of 1-deoxy-D-xylulose 5-phosphate (DXP) to produce the thiazole phosphate moiety of thiamine. Sulfur is provided by the thiocarboxylate moiety of the carrier protein ThiS. In vitro, sulfur can be provided by H(2)S. In Burkholderia lata (strain ATCC 17760 / DSM 23089 / LMG 22485 / NCIMB 9086 / R18194 / 383), this protein is Thiazole synthase.